Consider the following 658-residue polypeptide: UvrABC system protein C (658 aa).

The 79-residue stretch at 62–140 (PKPGVYRMLD…IKRFRPPYNV (79 aa)) folds into the GIY-YIG domain. One can recognise a UVR domain in the interval 250–285 (GAVQREIEAQMHKAAEDLDFERAAMLRDRLRAATFI).

The protein belongs to the UvrC family. In terms of assembly, interacts with UvrB in an incision complex.

Its subcellular location is the cytoplasm. The UvrABC repair system catalyzes the recognition and processing of DNA lesions. UvrC both incises the 5' and 3' sides of the lesion. The N-terminal half is responsible for the 3' incision and the C-terminal half is responsible for the 5' incision. The protein is UvrABC system protein C of Novosphingobium aromaticivorans (strain ATCC 700278 / DSM 12444 / CCUG 56034 / CIP 105152 / NBRC 16084 / F199).